We begin with the raw amino-acid sequence, 501 residues long: Cobyric acid synthase (501 aa).

The GATase cobBQ-type domain occupies 252-443 (DLDVAVIDLD…LHGIFDNPYW (192 aa)). Cys-333 serves as the catalytic Nucleophile. The active site involves His-435.

The protein belongs to the CobB/CobQ family. CobQ subfamily.

The protein operates within cofactor biosynthesis; adenosylcobalamin biosynthesis. Its function is as follows. Catalyzes amidations at positions B, D, E, and G on adenosylcobyrinic A,C-diamide. NH(2) groups are provided by glutamine, and one molecule of ATP is hydrogenolyzed for each amidation. This is Cobyric acid synthase from Limosilactobacillus reuteri (strain DSM 20016) (Lactobacillus reuteri).